The following is a 277-amino-acid chain: Large ribosomal subunit protein uL2 (277 aa).

The segment at 215-277 (GIRPTVRGSV…KLIVKRRNDK (63 aa)) is disordered. Over residues 264–277 (KYSDKLIVKRRNDK) the composition is skewed to basic and acidic residues.

This sequence belongs to the universal ribosomal protein uL2 family. As to quaternary structure, part of the 50S ribosomal subunit. Forms a bridge to the 30S subunit in the 70S ribosome.

One of the primary rRNA binding proteins. Required for association of the 30S and 50S subunits to form the 70S ribosome, for tRNA binding and peptide bond formation. It has been suggested to have peptidyltransferase activity; this is somewhat controversial. Makes several contacts with the 16S rRNA in the 70S ribosome. The polypeptide is Large ribosomal subunit protein uL2 (Clostridium acetobutylicum (strain ATCC 824 / DSM 792 / JCM 1419 / IAM 19013 / LMG 5710 / NBRC 13948 / NRRL B-527 / VKM B-1787 / 2291 / W)).